Reading from the N-terminus, the 197-residue chain is Large ribosomal subunit protein bL25 (197 aa).

This sequence belongs to the bacterial ribosomal protein bL25 family. CTC subfamily. As to quaternary structure, part of the 50S ribosomal subunit; part of the 5S rRNA/L5/L18/L25 subcomplex. Contacts the 5S rRNA. Binds to the 5S rRNA independently of L5 and L18.

Its function is as follows. This is one of the proteins that binds to the 5S RNA in the ribosome where it forms part of the central protuberance. The sequence is that of Large ribosomal subunit protein bL25 from Hydrogenobaculum sp. (strain Y04AAS1).